A 103-amino-acid polypeptide reads, in one-letter code: Small ribosomal subunit protein uS10 (103 aa).

Belongs to the universal ribosomal protein uS10 family. As to quaternary structure, part of the 30S ribosomal subunit.

Its function is as follows. Involved in the binding of tRNA to the ribosomes. In Chlorobium limicola (strain DSM 245 / NBRC 103803 / 6330), this protein is Small ribosomal subunit protein uS10.